The primary structure comprises 141 residues: Hemoglobin subunit alpha (141 aa).

Residues 1–141 enclose the Globin domain; that stretch reads VLSASDKTNL…VSTVLTSKYR (141 aa). Serine 3 is subject to Phosphoserine. An N6-succinyllysine modification is found at lysine 7. The residue at position 8 (threonine 8) is a Phosphothreonine. Lysine 11 is subject to N6-succinyllysine. Lysine 16 is modified (N6-acetyllysine; alternate). Lysine 16 carries the N6-succinyllysine; alternate modification. Residue tyrosine 24 is modified to Phosphotyrosine. Serine 35 carries the post-translational modification Phosphoserine. Position 40 is an N6-succinyllysine (lysine 40). Phosphoserine is present on serine 49. Histidine 58 is an O2 binding site. Histidine 87 contacts heme b. Serine 102 carries the post-translational modification Phosphoserine. At threonine 108 the chain carries Phosphothreonine. Phosphoserine is present on serine 124. Threonine 134 and threonine 137 each carry phosphothreonine. Serine 138 is subject to Phosphoserine.

The protein belongs to the globin family. Heterotetramer of two alpha chains and two beta chains. As to expression, red blood cells.

Functionally, involved in oxygen transport from the lung to the various peripheral tissues. The chain is Hemoglobin subunit alpha from Blarina brevicauda (Northern short-tailed shrew).